Here is a 601-residue protein sequence, read N- to C-terminus: Kelch-like ECH-associated protein 1A (601 aa).

One can recognise a BTB domain in the interval 44–117 (MDELRHHEML…VISRLIDFAY (74 aa)). The region spanning 153–253 (KNLEPSNVIG…LNAVHIYALP (101 aa)) is the BACK domain. Kelch repeat units lie at residues 292–337 (PTPH…PCSG), 338–388 (LGAC…PRNR), 389–435 (VGVG…ARLG), 436–482 (AGVA…VRSG), 484–529 (GVVC…CRSA), and 530–576 (HGVS…GRSG).

The protein belongs to the KEAP1 family. As to quaternary structure, homodimer and heterodimer; heterodimerizes with keap1b. Component of the BCR(KEAP1) E3 ubiquitin ligase complex, at least composed of 2 molecules of cul3, 2 molecules of keap1 (keap1a and/or keap1b), and rbx1. Interacts with nfe2l2/nrf2; the interaction is direct. Post-translationally, non-enzymatic covalent modifications of reactive cysteines by electrophile metabolites inactivate the BCR(KEAP1) complex. Widely expressed.

Its subcellular location is the cytoplasm. The protein resides in the nucleus. The protein operates within protein modification; protein ubiquitination. Its activity is regulated as follows. Ubiquitin ligase activity of the BCR(KEAP1) complex is inhibited by oxidative stress and electrophile metabolites such as sulforaphane. Electrophile metabolites react with reactive cysteine residues in keap1 and trigger non-enzymatic covalent modifications of these cysteine residues, leading to inactivate the ubiquitin ligase activity of the BCR(KEAP1) complex. Substrate-specific adapter of a BCR (BTB-CUL3-RBX1) E3 ubiquitin ligase complex that regulates the response to oxidative stress by targeting nfe2l2/nrf2 for ubiquitination. Keap1 acts as a key sensor of oxidative and electrophilic stress: in normal conditions, the BCR(KEAP1) complex mediates ubiquitination and degradation of nfe2l2/nrf2, a transcription factor regulating expression of many cytoprotective genes. In response to oxidative stress, different electrophile metabolites trigger non-enzymatic covalent modifications of highly reactive cysteine residues in KEAP1, leading to inactivate the ubiquitin ligase activity of the BCR(KEAP1) complex, promoting nfe2l2/nrf2 nuclear accumulation and expression of phase II detoxifying enzymes. The polypeptide is Kelch-like ECH-associated protein 1A (Danio rerio (Zebrafish)).